A 272-amino-acid chain; its full sequence is Exosome complex component Rrp42 (272 aa).

It belongs to the RNase PH family. Rrp42 subfamily. Component of the archaeal exosome complex. Forms a hexameric ring-like arrangement composed of 3 Rrp41-Rrp42 heterodimers. The hexameric ring associates with a trimer of Rrp4 and/or Csl4 subunits.

Its subcellular location is the cytoplasm. Functionally, non-catalytic component of the exosome, which is a complex involved in RNA degradation. Contributes to the structuring of the Rrp41 active site. This Thermococcus onnurineus (strain NA1) protein is Exosome complex component Rrp42.